Here is a 135-residue protein sequence, read N- to C-terminus: Probable transporter PD_1892 (135 aa).

4 helical membrane passes run Tyr-4–Leu-24, Ala-45–Phe-65, Val-71–Thr-91, and Ile-114–Tyr-134.

Belongs to the TsuA/YedE (TC 9.B.102) family.

The protein resides in the cell inner membrane. This chain is Probable transporter PD_1892, found in Xylella fastidiosa (strain Temecula1 / ATCC 700964).